The following is a 500-amino-acid chain: Lycopene beta cyclase, chloroplastic (500 aa).

The N-terminal 81 residues, 1-81, are a transit peptide targeting the chloroplast; it reads MDTLLKTPNN…ELPMYDPSKG (81 aa). 86-114 lines the NAD(+) pocket; it reads LAVVGGGPAGLAVAQQVSEAGLSVCSIDP.

The protein belongs to the lycopene cyclase family.

It localises to the plastid. The protein resides in the chloroplast. It catalyses the reaction a carotenoid psi-end group = a carotenoid beta-end derivative. It functions in the pathway carotenoid biosynthesis; beta-carotene biosynthesis. It participates in carotenoid biosynthesis; beta-zeacarotene biosynthesis. Catalyzes the double cyclization reaction which converts lycopene to beta-carotene and neurosporene to beta-zeacarotene. This Solanum lycopersicum (Tomato) protein is Lycopene beta cyclase, chloroplastic (LCY1).